The chain runs to 310 residues: Probable deoxyhypusine synthase (310 aa).

The active-site Nucleophile is Lys-284.

It belongs to the deoxyhypusine synthase family. The cofactor is NAD(+).

The catalysed reaction is [eIF5A protein]-L-lysine + spermidine = [eIF5A protein]-deoxyhypusine + propane-1,3-diamine. It participates in protein modification; eIF5A hypusination. Functionally, catalyzes the NAD-dependent oxidative cleavage of spermidine and the subsequent transfer of the butylamine moiety of spermidine to the epsilon-amino group of a specific lysine residue of the eIF-5A precursor protein to form the intermediate deoxyhypusine residue. This is Probable deoxyhypusine synthase (dys) from Thermoplasma volcanium (strain ATCC 51530 / DSM 4299 / JCM 9571 / NBRC 15438 / GSS1).